The following is a 156-amino-acid chain: Ribonuclease pancreatic (156 aa).

Residues 1–28 (MALEKSLVLLPLLVLALLVLGWIQPSLG) form the signal peptide. K35 and R38 together coordinate substrate. H40 (proton acceptor) is an active-site residue. 4 disulfide bridges follow: C54–C112, C68–C123, C86–C138, and C93–C100. N62 is a glycosylation site (N-linked (GlcNAc...) asparagine). Residue 69 to 73 (KPVNT) participates in substrate binding. N90 carries an N-linked (GlcNAc...) asparagine glycan. Residue K94 participates in substrate binding. N104 is a glycosylation site (N-linked (GlcNAc...) asparagine). Residue R113 participates in substrate binding. The active-site Proton donor is the H147.

Belongs to the pancreatic ribonuclease family. Monomer. Interacts with and forms tight 1:1 complexes with RNH1. Dimerization of two such complexes may occur. Interaction with RNH1 inhibits this protein.

It localises to the secreted. The catalysed reaction is an [RNA] containing cytidine + H2O = an [RNA]-3'-cytidine-3'-phosphate + a 5'-hydroxy-ribonucleotide-3'-[RNA].. It carries out the reaction an [RNA] containing uridine + H2O = an [RNA]-3'-uridine-3'-phosphate + a 5'-hydroxy-ribonucleotide-3'-[RNA].. Its function is as follows. Endonuclease that catalyzes the cleavage of RNA on the 3' side of pyrimidine nucleotides. Acts on single-stranded and double-stranded RNA. The polypeptide is Ribonuclease pancreatic (RNASE1) (Lemur catta (Ring-tailed lemur)).